Consider the following 254-residue polypeptide: Probable WRKY transcription factor 67 (254 aa).

A DNA-binding region (WRKY) is located at residues 102–170 (SRTMCPNDGF…YLGKHVCKAF (69 aa)).

The protein belongs to the WRKY group III family.

It localises to the nucleus. Transcription factor. Interacts specifically with the W box (5'-(T)TGAC[CT]-3'), a frequently occurring elicitor-responsive cis-acting element. This Arabidopsis thaliana (Mouse-ear cress) protein is Probable WRKY transcription factor 67 (WRKY67).